We begin with the raw amino-acid sequence, 358 residues long: Probable BOI-related E3 ubiquitin-protein ligase 2 (358 aa).

Residues 171–234 adopt a coiled-coil conformation; sequence KYEIEEKRKR…NQIWRDLAQT (64 aa). The tract at residues 214–250 is WRD domain; that stretch reads LEERVKSLSIENQIWRDLAQTNEATANHLRTNLEHVL. Residues 310–345 form an RING-type zinc finger; it reads CRNCGEEESCVLLLPCRHLCLCGVCGSSVHTCPICT.

As to quaternary structure, interacts with the DELLA proteins GAI, RGA, RGL1, RGL2 and RGL3.

It carries out the reaction S-ubiquitinyl-[E2 ubiquitin-conjugating enzyme]-L-cysteine + [acceptor protein]-L-lysine = [E2 ubiquitin-conjugating enzyme]-L-cysteine + N(6)-ubiquitinyl-[acceptor protein]-L-lysine.. It functions in the pathway protein degradation; proteasomal ubiquitin-dependent pathway. In terms of biological role, probable E3 ubiquitin-protein ligase. Has no effect on the stability of the DELLA proteins. In Arabidopsis thaliana (Mouse-ear cress), this protein is Probable BOI-related E3 ubiquitin-protein ligase 2 (BRG2).